A 196-amino-acid chain; its full sequence is Nucleoid occlusion factor SlmA (196 aa).

The HTH tetR-type domain occupies 6-66 (RNRREEILQA…GLIEFVEDTL (61 aa)). A DNA-binding region (H-T-H motif) is located at residues 29 to 48 (TTAKLAANLGVSEAALYRHF). Positions 108–135 (DALMGEHDRLRGRMEDLFNRIESSIKQI) form a coiled coil.

Belongs to the nucleoid occlusion factor SlmA family. In terms of assembly, homodimer. Interacts with FtsZ.

It localises to the cytoplasm. Its subcellular location is the nucleoid. Required for nucleoid occlusion (NO) phenomenon, which prevents Z-ring formation and cell division over the nucleoid. Acts as a DNA-associated cell division inhibitor that binds simultaneously chromosomal DNA and FtsZ, and disrupts the assembly of FtsZ polymers. SlmA-DNA-binding sequences (SBS) are dispersed on non-Ter regions of the chromosome, preventing FtsZ polymerization at these regions. The protein is Nucleoid occlusion factor SlmA of Idiomarina loihiensis (strain ATCC BAA-735 / DSM 15497 / L2-TR).